A 190-amino-acid polypeptide reads, in one-letter code: Large ribosomal subunit protein bL9 (190 aa).

Belongs to the bacterial ribosomal protein bL9 family.

In terms of biological role, binds to the 23S rRNA. The chain is Large ribosomal subunit protein bL9 from Methylorubrum extorquens (strain CM4 / NCIMB 13688) (Methylobacterium extorquens).